Reading from the N-terminus, the 205-residue chain is Small ribosomal subunit protein uS4 (205 aa).

Positions 1-12 are enriched in basic residues; sequence MSKRVQAKHKLD. The tract at residues 1–49 is disordered; the sequence is MSKRVQAKHKLDRRMGQNIWGRPKSPVNRREYGPGQHGQRRKGKMSDFG. Residues 94-155 enclose the S4 RNA-binding domain; sequence RRLDAVVYRS…ASRQLEIVVV (62 aa).

The protein belongs to the universal ribosomal protein uS4 family. Part of the 30S ribosomal subunit. Contacts protein S5. The interaction surface between S4 and S5 is involved in control of translational fidelity.

One of the primary rRNA binding proteins, it binds directly to 16S rRNA where it nucleates assembly of the body of the 30S subunit. Functionally, with S5 and S12 plays an important role in translational accuracy. The protein is Small ribosomal subunit protein uS4 of Methylorubrum extorquens (strain CM4 / NCIMB 13688) (Methylobacterium extorquens).